We begin with the raw amino-acid sequence, 353 residues long: Fasciculation and elongation protein zeta-2 (353 aa).

The segment at 19–49 (SLLDQENCNASPEPGAEAGAEAGGGADGFPA) is disordered. Residues 28-38 (ASPEPGAEAGA) show a composition bias toward low complexity. Phosphoserine occurs at positions 135, 176, and 195. Residues 214–286 (KRLSVSELNE…AKKKKKLKNG (73 aa)) adopt a coiled-coil conformation. Residues 271-300 (KEHKETAKKKKKLKNGSSQNGKNERSHMPG) form a disordered region.

The protein belongs to the zygin family. Homodimer; disulfide-linked. May form heterodimers with FEZ1. Interacts with synaptotagmin. As to expression, expressed in nonneural tissues, such as heart, lung, spleen, muscle, testis, placenta and melanocytes.

In terms of biological role, involved in axonal outgrowth and fasciculation. In Homo sapiens (Human), this protein is Fasciculation and elongation protein zeta-2 (FEZ2).